We begin with the raw amino-acid sequence, 214 residues long: Nicotinamidase (214 aa).

Catalysis depends on aspartate 18, which acts as the Proton acceptor. Aspartate 56, histidine 58, histidine 62, and histidine 91 together coordinate a divalent metal cation. The active site involves lysine 116. The Nucleophile role is filled by cysteine 161.

This sequence belongs to the isochorismatase family. It depends on a divalent metal cation as a cofactor.

The catalysed reaction is nicotinamide + H2O = nicotinate + NH4(+). It functions in the pathway cofactor biosynthesis; nicotinate biosynthesis; nicotinate from nicotinamide: step 1/1. In terms of biological role, catalyzes the deamidation of nicotinamide (NAM) into nicotinate (Na). Functions in the deamidating salvage pathway for production of NAD from nicotinamide. The chain is Nicotinamidase from Acinetobacter baylyi (strain ATCC 33305 / BD413 / ADP1).